A 95-amino-acid polypeptide reads, in one-letter code: Mitochondrial import inner membrane translocase subunit Tim13 (95 aa).

The Twin CX3C motif motif lies at 46 to 69; sequence CFKKCIGKPGSTLDNSEQKCIAMC. 2 disulfide bridges follow: cysteine 46-cysteine 69 and cysteine 50-cysteine 65.

This sequence belongs to the small Tim family. In terms of assembly, heterohexamer; composed of 3 copies of TIMM8 (TIMM8A or TIMM8B) and 3 copies of TIMM13, named soluble 70 kDa complex. Associates with the TIM22 complex, whose core is composed of TIMM22.

It localises to the mitochondrion inner membrane. Functionally, mitochondrial intermembrane chaperone that participates in the import and insertion of some multi-pass transmembrane proteins into the mitochondrial inner membrane. Also required for the transfer of beta-barrel precursors from the TOM complex to the sorting and assembly machinery (SAM complex) of the outer membrane. Acts as a chaperone-like protein that protects the hydrophobic precursors from aggregation and guide them through the mitochondrial intermembrane space. The TIMM8-TIMM13 complex mediates the import of some proteins while the predominant TIMM9-TIMM10 70 kDa complex mediates the import of much more proteins. The protein is Mitochondrial import inner membrane translocase subunit Tim13 (timm13) of Danio rerio (Zebrafish).